We begin with the raw amino-acid sequence, 183 residues long: Peptidyl-tRNA hydrolase (183 aa).

Residue tyrosine 14 coordinates tRNA. Residue histidine 19 is the Proton acceptor of the active site. TRNA contacts are provided by tyrosine 60 and asparagine 62.

The protein belongs to the PTH family. Monomer.

The protein resides in the cytoplasm. It carries out the reaction an N-acyl-L-alpha-aminoacyl-tRNA + H2O = an N-acyl-L-amino acid + a tRNA + H(+). Its function is as follows. Hydrolyzes ribosome-free peptidyl-tRNAs (with 1 or more amino acids incorporated), which drop off the ribosome during protein synthesis, or as a result of ribosome stalling. Functionally, catalyzes the release of premature peptidyl moieties from peptidyl-tRNA molecules trapped in stalled 50S ribosomal subunits, and thus maintains levels of free tRNAs and 50S ribosomes. The protein is Peptidyl-tRNA hydrolase of Mycoplasmoides gallisepticum (strain R(low / passage 15 / clone 2)) (Mycoplasma gallisepticum).